A 188-amino-acid polypeptide reads, in one-letter code: Threonylcarbamoyl-AMP synthase (188 aa).

In terms of domain architecture, YrdC-like spans 4–188 (VENLQQAVDA…ARSLQVLRQG (185 aa)).

This sequence belongs to the SUA5 family. TsaC subfamily.

The protein resides in the cytoplasm. It catalyses the reaction L-threonine + hydrogencarbonate + ATP = L-threonylcarbamoyladenylate + diphosphate + H2O. Required for the formation of a threonylcarbamoyl group on adenosine at position 37 (t(6)A37) in tRNAs that read codons beginning with adenine. Catalyzes the conversion of L-threonine, HCO(3)(-)/CO(2) and ATP to give threonylcarbamoyl-AMP (TC-AMP) as the acyladenylate intermediate, with the release of diphosphate. This Vibrio cholerae serotype O1 (strain ATCC 39541 / Classical Ogawa 395 / O395) protein is Threonylcarbamoyl-AMP synthase.